Here is a 796-residue protein sequence, read N- to C-terminus: Striatin-3 (796 aa).

N-acetylmethionine is present on methionine 1. Over residues 1 to 13 (MDELAGGGGGGQG) the composition is skewed to gly residues. The segment at 1-60 (MDELAGGGGGGQGMAAPPRPQQGPGGNLSLPPGANGAPGGGGPPAAEAAGPPAGPELSRP) is disordered. The interval 71-79 (YIQHEWARF) is caveolin-binding. A coiled-coil region spans residues 77 to 136 (ARFEMERAHWEVERAELQARIAFLQGERKGQENLKKDLVRRIKMLEYALKQERAKYHKLK). The residue at position 150 (threonine 150) is a Phosphothreonine. The interval 166 to 183 (QNSQLTWKQGRQLLRQYL) is calmodulin-binding. Phosphoserine is present on residues serine 202, serine 214, serine 229, serine 257, and serine 334. 2 disordered regions span residues 252–271 (ENAD…IPEG) and 311–335 (EDGE…DLSP). Positions 253 to 264 (NADDSDEEENDM) are enriched in acidic residues. 6 WD repeats span residues 477–516 (SHFD…PAKK), 530–569 (AHIG…VDPY), 583–622 (AHTD…PCVC), 678–717 (QSSN…MIHS), 720–759 (AHLD…CVQE), and 766–795 (KLDE…AKVF).

It belongs to the WD repeat striatin family. As to quaternary structure, tetramerizes. Part of the core of STRIPAK complexes composed of PP2A catalytic and scaffolding subunits, the striatins (PP2A regulatory subunits), the striatin-associated proteins MOB4, STRIP1 and STRIP2, PDCD10 and members of the STE20 kinases, such as STK24 and STK26. The STRIPAK complex can be extended by adapter proteins such as SLMAP:SIKE1 or CTTNBP2NL. Interacts with CDC42BPB. As to expression, mainly expressed in the brain and muscles but is also detected at low levels in various tissues such as kidney, spleen and lung.

It is found in the cytoplasm. It localises to the membrane. Its function is as follows. Calmodulin-binding scaffolding protein which is the center of the striatin-interacting phosphatase and kinase (STRIPAK) complexes. STRIPAK complexes have critical roles in protein (de)phosphorylation and are regulators of multiple signaling pathways including Hippo, MAPK, nuclear receptor and cytoskeleton remodeling. Different types of STRIPAK complexes are involved in a variety of biological processes such as cell growth, differentiation, apoptosis, metabolism and immune regulation. This is Striatin-3 (Strn3) from Mus musculus (Mouse).